The sequence spans 271 residues: Putative phosphoenolpyruvate synthase regulatory protein (271 aa).

151 to 158 (GVSRSGKT) serves as a coordination point for ADP.

This sequence belongs to the pyruvate, phosphate/water dikinase regulatory protein family. PSRP subfamily.

The catalysed reaction is [pyruvate, water dikinase] + ADP = [pyruvate, water dikinase]-phosphate + AMP + H(+). The enzyme catalyses [pyruvate, water dikinase]-phosphate + phosphate + H(+) = [pyruvate, water dikinase] + diphosphate. Its function is as follows. Bifunctional serine/threonine kinase and phosphorylase involved in the regulation of the phosphoenolpyruvate synthase (PEPS) by catalyzing its phosphorylation/dephosphorylation. The chain is Putative phosphoenolpyruvate synthase regulatory protein from Burkholderia mallei (strain NCTC 10247).